The sequence spans 489 residues: GTPase Der (489 aa).

EngA-type G domains lie at 3 to 166 and 195 to 368; these read PVIA…PKDE and IKIA…KSAV. GTP-binding positions include 9–16, 56–60, 118–121, 201–208, 248–252, and 313–316; these read GRPNVGKS, DTGGI, NKID, DTAGV, and NKWD. Residues 369–453 enclose the KH-like domain; that stretch reads TRWPTSRLTQ…PIRIEFKGGE (85 aa). The tract at residues 451–489 is disordered; it reads GGENPYEGNKNTLTDRQVNKKRRMMSHHKKADKKRRDKR. Basic residues predominate over residues 469–489; that stretch reads NKKRRMMSHHKKADKKRRDKR.

The protein belongs to the TRAFAC class TrmE-Era-EngA-EngB-Septin-like GTPase superfamily. EngA (Der) GTPase family. Associates with the 50S ribosomal subunit.

Functionally, GTPase that plays an essential role in the late steps of ribosome biogenesis. The polypeptide is GTPase Der (Pseudomonas syringae pv. tomato (strain ATCC BAA-871 / DC3000)).